The primary structure comprises 161 residues: 3-isopropylmalate dehydratase small subunit (161 aa).

It belongs to the LeuD family. LeuD type 2 subfamily. As to quaternary structure, heterodimer of LeuC and LeuD.

It carries out the reaction (2R,3S)-3-isopropylmalate = (2S)-2-isopropylmalate. The protein operates within amino-acid biosynthesis; L-leucine biosynthesis; L-leucine from 3-methyl-2-oxobutanoate: step 2/4. In terms of biological role, catalyzes the isomerization between 2-isopropylmalate and 3-isopropylmalate, via the formation of 2-isopropylmaleate. The sequence is that of 3-isopropylmalate dehydratase small subunit from Sulfolobus acidocaldarius (strain ATCC 33909 / DSM 639 / JCM 8929 / NBRC 15157 / NCIMB 11770).